Reading from the N-terminus, the 644-residue chain is Zinc finger protein 568 (644 aa).

Residues Val-48–Pro-119 form the KRAB domain. 15 consecutive C2H2-type zinc fingers follow at residues Phe-222–His-244, Tyr-250–His-272, Tyr-278–His-300, Tyr-306–His-328, Tyr-334–His-356, Tyr-362–His-384, Tyr-390–His-412, Tyr-418–His-440, Tyr-446–His-468, Tyr-474–His-496, Tyr-502–His-524, Tyr-530–His-552, Phe-558–His-580, Tyr-586–His-608, and Phe-614–His-636.

Belongs to the krueppel C2H2-type zinc-finger protein family. Interacts with TRIM28.

The protein resides in the nucleus. Functionally, has transcriptional repression activity, partially through the recruitment of the corepressor TRIM28 but also has repression activity independently of this interaction. Essential during embryonic development, where it acts as a direct repressor of a placental-specific transcript of IGF2 in early development and regulates convergent extension movements required for axis elongation and tissue morphogenesis in all germ layers. Also important for normal morphogenesis of extraembryonic tissues including the yolk sac, extraembryonic mesoderm and placenta. May enhance proliferation or maintenance of neural stem cells. The polypeptide is Zinc finger protein 568 (ZNF568) (Homo sapiens (Human)).